The chain runs to 216 residues: Serine acetyltransferase (216 aa).

The protein belongs to the transferase hexapeptide repeat family.

The protein localises to the cytoplasm. It catalyses the reaction L-serine + acetyl-CoA = O-acetyl-L-serine + CoA. It functions in the pathway amino-acid biosynthesis; L-cysteine biosynthesis; L-cysteine from L-serine: step 1/2. In Staphylococcus xylosus, this protein is Serine acetyltransferase (cysE).